The following is an 80-amino-acid chain: MALDTLAGLAICVGLVMGVTVIASCALLVFYYCDEREDGRPSKLLQRSIRRWRHGLSTESLTAILPDGSSTEQEIYHTRL.

Residues 10–30 traverse the membrane as a helical segment; sequence AICVGLVMGVTVIASCALLVF.

Its subcellular location is the host membrane. In Homo sapiens (Human), this protein is Protein UL148B (UL148B).